Reading from the N-terminus, the 309-residue chain is Ribonuclease Z (309 aa).

His-63, His-65, Asp-67, His-68, His-145, Asp-216, and His-274 together coordinate Zn(2+). Asp-67 serves as the catalytic Proton acceptor.

This sequence belongs to the RNase Z family. In terms of assembly, homodimer. The cofactor is Zn(2+).

It carries out the reaction Endonucleolytic cleavage of RNA, removing extra 3' nucleotides from tRNA precursor, generating 3' termini of tRNAs. A 3'-hydroxy group is left at the tRNA terminus and a 5'-phosphoryl group is left at the trailer molecule.. In terms of biological role, zinc phosphodiesterase, which displays some tRNA 3'-processing endonuclease activity. Probably involved in tRNA maturation, by removing a 3'-trailer from precursor tRNA. This Streptococcus pneumoniae (strain 70585) protein is Ribonuclease Z.